The sequence spans 156 residues: Ribosomal RNA large subunit methyltransferase H (156 aa).

Residues Leu-73, Gly-104, and 123–128 (LSSLTL) contribute to the S-adenosyl-L-methionine site.

It belongs to the RNA methyltransferase RlmH family. In terms of assembly, homodimer.

It localises to the cytoplasm. It carries out the reaction pseudouridine(1915) in 23S rRNA + S-adenosyl-L-methionine = N(3)-methylpseudouridine(1915) in 23S rRNA + S-adenosyl-L-homocysteine + H(+). In terms of biological role, specifically methylates the pseudouridine at position 1915 (m3Psi1915) in 23S rRNA. This Neisseria gonorrhoeae (strain ATCC 700825 / FA 1090) protein is Ribosomal RNA large subunit methyltransferase H.